The primary structure comprises 447 residues: Rab GDP dissociation inhibitor alpha (447 aa).

Phosphoserine is present on serine 427.

This sequence belongs to the Rab GDI family. In terms of assembly, interacts with RHOH. Interacts with the non-phosphorylated forms of RAB1A, RAB3A, RAB5A, RAB5B, RAB5C, RAB8A, RAB8B, RAB10, RAB12, RAB35, and RAB43. Interacts with RAB3A.

It is found in the cytoplasm. Its subcellular location is the golgi apparatus. The protein localises to the trans-Golgi network. Its function is as follows. Regulates the GDP/GTP exchange reaction of most Rab proteins by inhibiting the dissociation of GDP from them, and the subsequent binding of GTP to them. Promotes the dissociation of GDP-bound Rab proteins from the membrane and inhibits their activation. Promotes the dissociation of RAB1A, RAB3A, RAB5A and RAB10 from membranes. In Bos taurus (Bovine), this protein is Rab GDP dissociation inhibitor alpha (GDI1).